The sequence spans 257 residues: MGPRGRQSPSATLAPSQGSCFFILFCLRLGASCPQACQCPDHAGAVAVHCSSRGLQEIPRDIPADTVLLKLDANRISRVPNGAFQHLPQLRELDLSHNAIEAIGPAAFSGLAGGLRLLDLSHNRIRRIPKDALGKLSAKIRLSHNPLHCECALQEALWELKLDPDSVDEIACHTSAQEQFVGKPLIQVLDSGASFCSTHRKTTDVAMLVTMFGWFTMVIAYVVYYVRHNQEDARRHLEYLKSLPSAPVSKEPLSPVP.

Residues 1-32 (MGPRGRQSPSATLAPSQGSCFFILFCLRLGAS) form the signal peptide. One can recognise an LRRNT domain in the interval 33–64 (CPQACQCPDHAGAVAVHCSSRGLQEIPRDIPA). LRR repeat units follow at residues 65–86 (DTVL…AFQH), 89–110 (QLRE…AFSG), and 114–135 (GLRL…ALGK). Residues 145 to 198 (NPLHCECALQEALWELKLDPDSVDEIACHTSAQEQFVGKPLIQVLDSGASFCST) enclose the LRRCT domain. Residues 205-225 (VAMLVTMFGWFTMVIAYVVYY) form a helical membrane-spanning segment.

It belongs to the LRRC3 family.

The protein localises to the membrane. This Mus musculus (Mouse) protein is Leucine-rich repeat-containing protein 3 (Lrrc3).